The sequence spans 557 residues: Glutamine--tRNA ligase (557 aa).

The 'HIGH' region signature appears at 42 to 52 (PEPNGYLHIGH). Residues 43 to 45 (EPN) and 49 to 55 (HIGHAKS) each bind ATP. L-glutamine contacts are provided by Asp-75 and Tyr-220. Residues Thr-239 and 270-271 (RL) contribute to the ATP site. The 'KMSKS' region motif lies at 277–281 (LTSKR).

It belongs to the class-I aminoacyl-tRNA synthetase family. In terms of assembly, monomer.

Its subcellular location is the cytoplasm. The catalysed reaction is tRNA(Gln) + L-glutamine + ATP = L-glutaminyl-tRNA(Gln) + AMP + diphosphate. The protein is Glutamine--tRNA ligase of Haemophilus influenzae (strain ATCC 51907 / DSM 11121 / KW20 / Rd).